A 967-amino-acid polypeptide reads, in one-letter code: Kinesin heavy chain (967 aa).

The Kinesin motor domain occupies 8-326; that stretch reads NIKVICRVRP…LLFGQRAKTI (319 aa). 85 to 92 serves as a coordination point for ATP; it reads GQTSSGKT. The tract at residues 173 to 314 is microtubule-binding; the sequence is VSSPEEVMEV…PASYNESETK (142 aa). Disordered stretches follow at residues 387 to 411 and 923 to 967; these read VPAE…NEGD and KPIR…ESKA. Residues 392–861 are a coiled coil; that stretch reads PATSTTSLAG…RDNADLRCEL (470 aa). The tract at residues 862 to 967 is globular; it reads PKLEKRLRAT…PIRMAPESKA (106 aa). A compositionally biased stretch (polar residues) spans 949 to 958; the sequence is QNGPMITSTP.

It belongs to the TRAFAC class myosin-kinesin ATPase superfamily. Kinesin family. Kinesin subfamily. As to quaternary structure, oligomer composed of two heavy chains and two light chains. Interacts with amyloid-beta precursor-like protein (via cytoplasmic domain).

Its subcellular location is the cytoplasm. The protein localises to the cytoskeleton. The protein resides in the cell projection. It is found in the axon. Its function is as follows. Kinesin is a microtubule-associated force-producing protein that may play a role in organelle transport. In Doryteuthis pealeii (Longfin inshore squid), this protein is Kinesin heavy chain.